Here is a 207-residue protein sequence, read N- to C-terminus: Small ribosomal subunit protein uS4c (207 aa).

The segment at 20–52 is disordered; the sequence is GFSKKIDRNHTPPGQHGWKKKASDQKKSKESQY. Over residues 40–52 the composition is skewed to basic and acidic residues; it reads KASDQKKSKESQY. The S4 RNA-binding domain occupies 97–158; sequence MRLDNIIYRL…NSQQLIKNYL (62 aa).

The protein belongs to the universal ribosomal protein uS4 family. In terms of assembly, part of the 30S ribosomal subunit. Contacts protein S5. The interaction surface between S4 and S5 is involved in control of translational fidelity.

It localises to the plastid. Its function is as follows. One of the primary rRNA binding proteins, it binds directly to 16S rRNA where it nucleates assembly of the body of the 30S subunit. Functionally, with S5 and S12 plays an important role in translational accuracy. The chain is Small ribosomal subunit protein uS4c (rps4) from Prototheca wickerhamii.